Here is a 271-residue protein sequence, read N- to C-terminus: Glutamate racemase (271 aa).

Residues 10–11 (DS) and 42–43 (YG) contribute to the substrate site. The Proton donor/acceptor role is filled by Cys-73. Position 74 to 75 (74 to 75 (NT)) interacts with substrate. Cys-183 acts as the Proton donor/acceptor in catalysis. 184–185 (TH) lines the substrate pocket.

The protein belongs to the aspartate/glutamate racemases family.

It carries out the reaction L-glutamate = D-glutamate. It participates in cell wall biogenesis; peptidoglycan biosynthesis. Functionally, provides the (R)-glutamate required for cell wall biosynthesis. This Lactococcus lactis subsp. lactis (strain IL1403) (Streptococcus lactis) protein is Glutamate racemase.